The following is a 628-amino-acid chain: LRR receptor kinase SERK2 (628 aa).

Residues 1–31 (MAEARLLRRRRLCLAVPFVWVVAVAVSRVGA) form the signal peptide. LRR repeat units lie at residues 97–121 (LKNLQYLELYSNNISGTIPNELGNL), 123–144 (NLVSLDLYLNNFTGFIPETLGQ), 145–169 (LYKLRFLRLNNNSLSGSIPKSLTNI), and 170–194 (TTLQVLDLSNNNLSGEVPSTGSFSL). Asn109, Asn120, Asn133, Asn155, Asn168, and Asn181 each carry an N-linked (GlcNAc...) asparagine glycan. The chain crosses the membrane as a helical span at residues 243 to 263 (AIAGGVAAAAALLFAVPAIGF). Thr303 carries the phosphothreonine modification. Residues 306–593 (FSNKNILGRG…GLAERWEEWQ (288 aa)) form the Protein kinase domain. 312 to 320 (LGRGGFGKV) contributes to the ATP binding site. Phosphoserine is present on Ser329. Position 334 (Lys334) interacts with ATP. Phosphothreonine is present on Thr350. Residues Ser356 and Ser387 each carry the phosphoserine modification. The Proton acceptor role is filled by Asp433. 3 positions are modified to phosphothreonine: Thr463, Thr466, and Thr472. Ser615 carries the post-translational modification Phosphoserine. Thr616 is modified (phosphothreonine). Ser625 is subject to Phosphoserine.

It belongs to the protein kinase superfamily. Ser/Thr protein kinase family. In terms of assembly, interacts with BRI1. Interacts with XA21, XA26/XA3 and FLS2. Autophosphorylated on serine and threonine residues. Expressed in flag leaves. Expressed in roots, shoot apex, leaf blades, leaf sheaths, panicles and flowers. Expressed leaves, stems, sheaths and flowers.

It localises to the cell membrane. The catalysed reaction is L-seryl-[protein] + ATP = O-phospho-L-seryl-[protein] + ADP + H(+). It carries out the reaction L-threonyl-[protein] + ATP = O-phospho-L-threonyl-[protein] + ADP + H(+). Functionally, LRR receptor kinase involved in positive regulation of somatic embryogenesis and defense response against the rice blast fungus pathogen Magnaporthe oryzae. Involved in the positive regulation of receptor kinase-mediated immunity. Required for immunity mediated by the LRR receptor kinases XA21 and XA26/XA3 which recognize effectors from the bacterial pathogen Xanthomonas oryzae pv. oryzae (Xoo). Required for the immune response mediated by the LRR receptor kinase FLS2 which recognizes specifically the bacterial flagellin (flg22) effector. Kinase activity and direct interaction with the immune receptors is critical for their function. Involved in the regulation of plant growth through the brassinosteroid (BR) signaling pathway. The sequence is that of LRR receptor kinase SERK2 from Oryza sativa subsp. japonica (Rice).